The sequence spans 291 residues: tRNA-cytidine(32) 2-sulfurtransferase (291 aa).

The PP-loop motif motif lies at 36–41; sequence SGGKDS. Residues Cys-111, Cys-114, and Cys-202 each contribute to the [4Fe-4S] cluster site. Positions 259-291 are disordered; that stretch reads DPWLDAEDEEAEDCGEPSAGDGVVSLGGARGGR. The span at 262 to 273 shows a compositional bias: acidic residues; that stretch reads LDAEDEEAEDCG.

The protein belongs to the TtcA family. In terms of assembly, homodimer. The cofactor is Mg(2+). Requires [4Fe-4S] cluster as cofactor.

Its subcellular location is the cytoplasm. The catalysed reaction is cytidine(32) in tRNA + S-sulfanyl-L-cysteinyl-[cysteine desulfurase] + AH2 + ATP = 2-thiocytidine(32) in tRNA + L-cysteinyl-[cysteine desulfurase] + A + AMP + diphosphate + H(+). It participates in tRNA modification. Catalyzes the ATP-dependent 2-thiolation of cytidine in position 32 of tRNA, to form 2-thiocytidine (s(2)C32). The sulfur atoms are provided by the cysteine/cysteine desulfurase (IscS) system. This Anaeromyxobacter sp. (strain K) protein is tRNA-cytidine(32) 2-sulfurtransferase.